We begin with the raw amino-acid sequence, 507 residues long: Pyridoxine 4-oxidase (507 aa).

Catalysis depends on His-448, which acts as the Proton acceptor.

This sequence belongs to the GMC oxidoreductase family. In terms of assembly, monomer. FAD serves as cofactor.

The enzyme catalyses pyridoxine + O2 = pyridoxal + H2O2. It participates in cofactor degradation; B6 vitamer degradation; pyridoxal from pyridoxine (oxidase route): step 1/1. This Microbacterium luteolum (Aureobacterium luteolum) protein is Pyridoxine 4-oxidase (pno).